Reading from the N-terminus, the 71-residue chain is ATP synthase F(0) complex subunit e, mitochondrial (71 aa).

Position 34 is an N6-acetyllysine (Lys-34). A Phosphoserine modification is found at Ser-68.

Belongs to the ATPase e subunit family. In terms of assembly, component of the ATP synthase complex composed at least of ATP5F1A/subunit alpha, ATP5F1B/subunit beta, ATP5MC1/subunit c (homooctomer), MT-ATP6/subunit a, MT-ATP8/subunit 8, ATP5ME/subunit e, ATP5MF/subunit f, ATP5MG/subunit g, ATP5MK/subunit k, ATP5MJ/subunit j, ATP5F1C/subunit gamma, ATP5F1D/subunit delta, ATP5F1E/subunit epsilon, ATP5PF/subunit F6, ATP5PB/subunit b, ATP5PD/subunit d, ATP5PO/subunit OSCP. ATP synthase complex consists of a soluble F(1) head domain (subunits alpha(3) and beta(3)) - the catalytic core - and a membrane F(0) domain - the membrane proton channel (subunits c, a, 8, e, f, g, k and j). These two domains are linked by a central stalk (subunits gamma, delta, and epsilon) rotating inside the F1 region and a stationary peripheral stalk (subunits F6, b, d, and OSCP).

The protein resides in the mitochondrion. It localises to the mitochondrion inner membrane. Functionally, subunit e, of the mitochondrial membrane ATP synthase complex (F(1)F(0) ATP synthase or Complex V) that produces ATP from ADP in the presence of a proton gradient across the membrane which is generated by electron transport complexes of the respiratory chain. ATP synthase complex consist of a soluble F(1) head domain - the catalytic core - and a membrane F(1) domain - the membrane proton channel. These two domains are linked by a central stalk rotating inside the F(1) region and a stationary peripheral stalk. During catalysis, ATP synthesis in the catalytic domain of F(1) is coupled via a rotary mechanism of the central stalk subunits to proton translocation. In vivo, can only synthesize ATP although its ATP hydrolase activity can be activated artificially in vitro. Part of the complex F(0) domain. This chain is ATP synthase F(0) complex subunit e, mitochondrial, found in Pongo abelii (Sumatran orangutan).